The primary structure comprises 323 residues: 1D-myo-inositol 2-acetamido-2-deoxy-alpha-D-glucopyranoside deacetylase 1 (323 aa).

Zn(2+)-binding residues include H30, D33, and H165.

Belongs to the MshB deacetylase family. It depends on Zn(2+) as a cofactor.

It catalyses the reaction 1D-myo-inositol 2-acetamido-2-deoxy-alpha-D-glucopyranoside + H2O = 1D-myo-inositol 2-amino-2-deoxy-alpha-D-glucopyranoside + acetate. Its function is as follows. Catalyzes the deacetylation of 1D-myo-inositol 2-acetamido-2-deoxy-alpha-D-glucopyranoside (GlcNAc-Ins) in the mycothiol biosynthesis pathway. In Catenulispora acidiphila (strain DSM 44928 / JCM 14897 / NBRC 102108 / NRRL B-24433 / ID139908), this protein is 1D-myo-inositol 2-acetamido-2-deoxy-alpha-D-glucopyranoside deacetylase 1.